A 117-amino-acid chain; its full sequence is Large ribosomal subunit protein bL20 (117 aa).

This sequence belongs to the bacterial ribosomal protein bL20 family.

In terms of biological role, binds directly to 23S ribosomal RNA and is necessary for the in vitro assembly process of the 50S ribosomal subunit. It is not involved in the protein synthesizing functions of that subunit. The polypeptide is Large ribosomal subunit protein bL20 (Rickettsia akari (strain Hartford)).